The following is a 468-amino-acid chain: MRISALEGCRVALWGWGRESRAAYRTFRAAFPKQPLTLFCTIAEATEVQALADPVLSIETEVSVPRLAAFDVVIKSPGISPYSPLAVAATAAGAHFIGGTQLWFAAHADTDGVVPGAVCVTGTKGKSTTTALLAHLLRAAGHCTALAGNIGMPLLELLTPQPTPEYWAIELSSYQTGDVARSGARPVLALVLNVFPEHLDWHGSEQRYINDKLSLVTVTRPRIALLNAADPRLASLALPQSDLRWFNRRDGWHVRGQVVYRGDRAVLDTALIPLPGAHNGSNVCAVLATLEALGLNAVALAPAACNFHPLPNRLQFLGERDGILWVNDSISTTPHATLAALDCFLGRCRVAVLVGGYDRGVDWECFAARITRKVPLDIVTMGANGPHIQALLAPLAAGRFGLHAAVDLPQAVALARTALGAQGGVLLLSPGAPSFGAYQDYVARGRHFAILAGFDPEVISSISGLGIA.

Position 122-128 (Gly122–Thr128) interacts with ATP.

It belongs to the MurCDEF family. MurD2 subfamily.

The protein localises to the cytoplasm. The catalysed reaction is UDP-N-acetyl-alpha-D-muramoyl-L-alanine + L-glutamate + ATP = UDP-N-acetyl-alpha-D-muramoyl-L-alanyl-L-glutamate + ADP + phosphate + H(+). It functions in the pathway cell wall biogenesis; peptidoglycan biosynthesis. Cell wall formation. Catalyzes the addition of L-glutamate to the nucleotide precursor UDP-N-acetylmuramoyl-L-alanine. This Xylella fastidiosa (strain 9a5c) protein is UDP-N-acetylmuramoyl-L-alanine--L-glutamate ligase.